A 496-amino-acid polypeptide reads, in one-letter code: Probable cytosol aminopeptidase (496 aa).

Mn(2+)-binding residues include Lys-266 and Asp-271. The active site involves Lys-278. The Mn(2+) site is built by Asp-290, Asp-349, and Glu-351. Arg-353 is a catalytic residue.

It belongs to the peptidase M17 family. Requires Mn(2+) as cofactor.

Its subcellular location is the cytoplasm. The enzyme catalyses Release of an N-terminal amino acid, Xaa-|-Yaa-, in which Xaa is preferably Leu, but may be other amino acids including Pro although not Arg or Lys, and Yaa may be Pro. Amino acid amides and methyl esters are also readily hydrolyzed, but rates on arylamides are exceedingly low.. It catalyses the reaction Release of an N-terminal amino acid, preferentially leucine, but not glutamic or aspartic acids.. Its function is as follows. Presumably involved in the processing and regular turnover of intracellular proteins. Catalyzes the removal of unsubstituted N-terminal amino acids from various peptides. In Trichodesmium erythraeum (strain IMS101), this protein is Probable cytosol aminopeptidase.